Here is a 111-residue protein sequence, read N- to C-terminus: Colicin-Ia immunity protein (111 aa).

2 helical membrane-spanning segments follow: residues 33–53 and 85–105; these read LLFWCISLCGMVLYPVAKWYI and TGTVFILSLPLSMIYILSVII.

The protein resides in the cell membrane. Functionally, this protein is able to protect a cell, which harbors the plasmid ColIa-CA53 encoding colicin Ia, against colicin Ia. The polypeptide is Colicin-Ia immunity protein (Escherichia coli).